We begin with the raw amino-acid sequence, 127 residues long: Mediator of RNA polymerase II transcription subunit 9 (127 aa).

Residues 95–119 (QKEQEIEAKKRVHRQLRQRVEEIAG) are a coiled coil.

It belongs to the Mediator complex subunit 9 family. Component of the Mediator complex.

It is found in the nucleus. Functionally, component of the Mediator complex, a coactivator involved in the regulated transcription of nearly all RNA polymerase II-dependent genes. Mediator functions as a bridge to convey information from gene-specific regulatory proteins to the basal RNA polymerase II transcription machinery. Mediator is recruited to promoters by direct interactions with regulatory proteins and serves as a scaffold for the assembly of a functional preinitiation complex with RNA polymerase II and the general transcription factors. This Eremothecium gossypii (strain ATCC 10895 / CBS 109.51 / FGSC 9923 / NRRL Y-1056) (Yeast) protein is Mediator of RNA polymerase II transcription subunit 9 (CSE2).